We begin with the raw amino-acid sequence, 672 residues long: Probable urocanate hydratase (672 aa).

Residues 128-129 (GG), Gln206, 253-255 (GMS), Glu273, 318-319 (NV), 340-344 (QTSLH), 351-352 (YY), Tyr400, and Gly592 contribute to the NAD(+) site.

This sequence belongs to the urocanase family. NAD(+) serves as cofactor.

It carries out the reaction 4-imidazolone-5-propanoate = trans-urocanate + H2O. The protein operates within amino-acid degradation; L-histidine degradation into L-glutamate; N-formimidoyl-L-glutamate from L-histidine: step 2/3. The chain is Probable urocanate hydratase (uroc1) from Dictyostelium discoideum (Social amoeba).